Consider the following 202-residue polypeptide: Holliday junction resolvase RecU (202 aa).

T85, D87, E100, and Q119 together coordinate Mg(2+).

Belongs to the RecU family. Mg(2+) serves as cofactor.

It is found in the cytoplasm. It catalyses the reaction Endonucleolytic cleavage at a junction such as a reciprocal single-stranded crossover between two homologous DNA duplexes (Holliday junction).. Its function is as follows. Endonuclease that resolves Holliday junction intermediates in genetic recombination. Cleaves mobile four-strand junctions by introducing symmetrical nicks in paired strands. Promotes annealing of linear ssDNA with homologous dsDNA. Required for DNA repair, homologous recombination and chromosome segregation. This is Holliday junction resolvase RecU from Streptococcus uberis (strain ATCC BAA-854 / 0140J).